The sequence spans 440 residues: Gap junction alpha-8 protein (440 aa).

An intramembrane segment occupies 2-12 (GDWSFLGNILE). The Cytoplasmic portion of the chain corresponds to 13-21 (EVNEHSTVI). Residues 22-42 (GRVWLTVLFIFRILILGTAAE) form a helical membrane-spanning segment. Over 43-71 (FVWGDEQSDFVCNTQQPGCENVCYDEAFP) the chain is Extracellular. Cystine bridges form between C54/C201, C61/C195, and C65/C190. Residues 72–92 (ISHIRLWVLQIIFVSTPSLMY) form a helical membrane-spanning segment. The Cytoplasmic segment spans residues 93-161 (VGHAVHHVRM…GTLLRTYVCH (69 aa)). The interval 111–143 (AEELCQQSRSNGGERVPIAPDQASIRKSSSSSK) is disordered. A helical transmembrane segment spans residues 162–182 (IIFKTLFEVGFIVGHYFLYGF). Over 183-210 (RILPLYRCSRWPCPNVVDCFVSRPTEKT) the chain is Extracellular. Residues 211 to 231 (IFILFMLSVAFVSLFLNIMEM) form a helical membrane-spanning segment. Over 232–440 (SHLGMKGIRS…SRARSDDLTI (209 aa)) the chain is Cytoplasmic. A disordered region spans residues 334 to 440 (GAQEVEREEQ…SRARSDDLTI (107 aa)). Basic and acidic residues-rich tracts occupy residues 353 to 364 (VGEKKQEAEKVA) and 375 to 399 (DGEKVETPGVGKDDEKEELQAEKVT). The span at 423–432 (LSRLSKASSR) shows a compositional bias: low complexity.

Belongs to the connexin family. Alpha-type (group II) subfamily. As to quaternary structure, a hemichannel or connexon is composed of a hexamer of connexins. A functional gap junction is formed by the apposition of two hemichannels. Forms heteromeric channels with GJA3. In terms of tissue distribution, detected in eye lens (at protein level).

It localises to the cell membrane. It is found in the cell junction. Its subcellular location is the gap junction. In terms of biological role, structural component of eye lens gap junctions. Gap junctions are dodecameric channels that connect the cytoplasm of adjoining cells. They are formed by the docking of two hexameric hemichannels, one from each cell membrane. Small molecules and ions diffuse from one cell to a neighboring cell via the central pore. The chain is Gap junction alpha-8 protein (Gja8) from Rattus norvegicus (Rat).